Consider the following 339-residue polypeptide: N-acetyl-gamma-glutamyl-phosphate reductase (339 aa).

The active site involves cysteine 145.

It belongs to the NAGSA dehydrogenase family. Type 1 subfamily.

The protein localises to the cytoplasm. It catalyses the reaction N-acetyl-L-glutamate 5-semialdehyde + phosphate + NADP(+) = N-acetyl-L-glutamyl 5-phosphate + NADPH + H(+). Its pathway is amino-acid biosynthesis; L-arginine biosynthesis; N(2)-acetyl-L-ornithine from L-glutamate: step 3/4. Functionally, catalyzes the NADPH-dependent reduction of N-acetyl-5-glutamyl phosphate to yield N-acetyl-L-glutamate 5-semialdehyde. The protein is N-acetyl-gamma-glutamyl-phosphate reductase of Thermotoga petrophila (strain ATCC BAA-488 / DSM 13995 / JCM 10881 / RKU-1).